Consider the following 941-residue polypeptide: Isoleucine--tRNA ligase (941 aa).

A 'HIGH' region motif is present at residues 58–68 (PYANGDIHIGH). Residue E562 coordinates L-isoleucyl-5'-AMP. The 'KMSKS' region motif lies at 603–607 (KMSKS). Residue K606 coordinates ATP. Zn(2+) is bound by residues C904, C907, C924, and C927.

Belongs to the class-I aminoacyl-tRNA synthetase family. IleS type 1 subfamily. Monomer. Requires Zn(2+) as cofactor.

It localises to the cytoplasm. It carries out the reaction tRNA(Ile) + L-isoleucine + ATP = L-isoleucyl-tRNA(Ile) + AMP + diphosphate. Catalyzes the attachment of isoleucine to tRNA(Ile). As IleRS can inadvertently accommodate and process structurally similar amino acids such as valine, to avoid such errors it has two additional distinct tRNA(Ile)-dependent editing activities. One activity is designated as 'pretransfer' editing and involves the hydrolysis of activated Val-AMP. The other activity is designated 'posttransfer' editing and involves deacylation of mischarged Val-tRNA(Ile). This is Isoleucine--tRNA ligase from Alkalilimnicola ehrlichii (strain ATCC BAA-1101 / DSM 17681 / MLHE-1).